The following is a 248-amino-acid chain: Tetraspanin-18 (248 aa).

Residues 1-13 lie on the Cytoplasmic side of the membrane; sequence MEGDCLSCMKYLM. The chain crosses the membrane as a helical span at residues 14-34; the sequence is FVFNFFIFLGGACLLAIGIWV. Topologically, residues 35-49 are extracellular; it reads MVDPTGFREIVAANP. Residues 50–70 form a helical membrane-spanning segment; it reads LLLTGAYILLAMGGLLFLLGF. Over 71-83 the chain is Cytoplasmic; the sequence is LGCCGAVRENKCL. Residues 84-104 form a helical membrane-spanning segment; that stretch reads LLFFFLFILIIFLAELSAAIL. The Extracellular portion of the chain corresponds to 105–223; that stretch reads AFIFRENLTR…TFETYVYLAG (119 aa). Asn111 and Asn129 each carry an N-linked (GlcNAc...) asparagine glycan. Residues 224 to 244 form a helical membrane-spanning segment; it reads ALAIGVLAIELFAMIFAMCLF. At 245–248 the chain is on the cytoplasmic side; the sequence is RGIQ.

Belongs to the tetraspanin (TM4SF) family. Interacts with ORAI1; this interaction regulates ORAI1 exit from the endoplasmic (ER), and/or Golgi, and trafficking to the cell surface. As to expression, highly expressed in primary endothelial cells. Expressed in the embryo heart. Weakly expressed the embryo skeletal muscle.

It localises to the membrane. Plays a role in the cell surface localization of ORAI1 and may participate in the regulation of Ca(2+) signaling and the VWF release in response to inflammatory stimuli. In Homo sapiens (Human), this protein is Tetraspanin-18.